The chain runs to 412 residues: MSSADTPINWKQNLTVTWLGCFLTGAAFSLVMPFLPLYVEQLGVTGHSALNMWSGLVFSITFLFSAIASPFWGGLADRKGRKIMLLRSALGMSVVMMLMGMAQNIWQFLLLRALLGLLGGFIPNANALIATQIPRHKSGWALGTLSTGAVSGALLGPLAGGFLADHWGLRTVFFMTAAVLFICFLFTLFLIRENFVPIAKKEMLSAREVFSSLQNPKLVLSLFVTSLIIQVATGSIAPILTLYVRDLAGNVSNIAFISGMIASVPGIAALMSAPRLGRLGDRIGPEKILIVALIISVLLLIPMSFVQTPLQLGILRFLLGAADGALLPAVQTLLVYNSTSQISGRIFSYNQSFRDIGNVTGPLIGASVSANYGFRAVFLVTAGVVLFNAIYSTLSLRRPAAEASQPDRHSVN.

A run of 11 helical transmembrane segments spans residues 19–39, 56–76, 90–110, 113–133, 144–164, 171–191, 222–242, 254–274, 288–308, 317–337, and 376–396; these read LGCFLTGAAFSLVMPFLPLYV, LVFSITFLFSAIASPFWGGLA, LGMSVVMMLMGMAQNIWQFLL, ALLGLLGGFIPNANALIATQI, TLSTGAVSGALLGPLAGGFLA, TVFFMTAAVLFICFLFTLFLI, LFVTSLIIQVATGSIAPILTL, IAFISGMIASVPGIAALMSAP, ILIVALIISVLLLIPMSFVQT, FLLGAADGALLPAVQTLLVYN, and AVFLVTAGVVLFNAIYSTLSL.

The protein belongs to the major facilitator superfamily. DHA1 family. MdtG (TC 2.A.1.2.20) subfamily.

Its subcellular location is the cell inner membrane. The chain is Multidrug resistance protein MdtG from Klebsiella pneumoniae (strain 342).